Consider the following 269-residue polypeptide: Phosphate import ATP-binding protein PstB (269 aa).

One can recognise an ABC transporter domain in the interval 23-264; sequence IATRNLEFYY…PSKQQTEDYI (242 aa). 55–62 lines the ATP pocket; sequence GPSGCGKS.

This sequence belongs to the ABC transporter superfamily. Phosphate importer (TC 3.A.1.7) family. As to quaternary structure, the complex is composed of two ATP-binding proteins (PstB), two transmembrane proteins (PstC and PstA) and a solute-binding protein (PstS).

Its subcellular location is the cell inner membrane. It carries out the reaction phosphate(out) + ATP + H2O = ADP + 2 phosphate(in) + H(+). Part of the ABC transporter complex PstSACB involved in phosphate import. Responsible for energy coupling to the transport system. The protein is Phosphate import ATP-binding protein PstB of Xylella fastidiosa (strain Temecula1 / ATCC 700964).